We begin with the raw amino-acid sequence, 152 residues long: Endoribonuclease YbeY (152 aa).

Residues H113, H117, and H123 each coordinate Zn(2+).

The protein belongs to the endoribonuclease YbeY family. The cofactor is Zn(2+).

The protein localises to the cytoplasm. Its function is as follows. Single strand-specific metallo-endoribonuclease involved in late-stage 70S ribosome quality control and in maturation of the 3' terminus of the 16S rRNA. The protein is Endoribonuclease YbeY of Paracidovorax citrulli (strain AAC00-1) (Acidovorax citrulli).